Reading from the N-terminus, the 483-residue chain is ATP-dependent RNA helicase DDX25 (483 aa).

The Nuclear export signal motif lies at 61–74; that stretch reads LAANSLLNKLIRQS. The Q motif signature appears at 97–125; sequence KTFEELRLKEELLKGIYAMGFNRPSKIQE. The short motif at 100–114 is the Nuclear localization signal element; the sequence is EELRLKEELLKGIYA. Residues 130–300 enclose the Helicase ATP-binding domain; the sequence is MMLAHPPQNL…ERIIPDPNVI (171 aa). 143–150 contributes to the ATP binding site; that stretch reads SQSGTGKT. Residues 247-250 carry the DEAD box motif; sequence DEAD. One can recognise a Helicase C-terminal domain in the interval 311-478; the sequence is NIRQYYVLCG…QLDPEDMDEI (168 aa).

The protein belongs to the DEAD box helicase family. Post-translationally, phosphorylated on threonine residues. The phosphorylated form is found in the cytoplasm but not in the nucleus.

Its subcellular location is the cytoplasm. The protein resides in the nucleus. The catalysed reaction is ATP + H2O = ADP + phosphate + H(+). In terms of biological role, ATP-dependent RNA helicase. Required for mRNA export and translation regulation during spermatid development. In Bos taurus (Bovine), this protein is ATP-dependent RNA helicase DDX25 (DDX25).